The chain runs to 529 residues: Zinc finger CCCH domain-containing protein 65 (529 aa).

Residues 1–10 (MADADARAPP) are compositionally biased toward basic and acidic residues. Disordered regions lie at residues 1 to 36 (MADA…EDEV) and 134 to 179 (PARK…GSYV). The segment covering 14–31 (PGATPIGSISPSSAAPAA) has biased composition (low complexity). 3 C3H1-type zinc fingers span residues 108 to 136 (RPGE…HPAR), 237 to 265 (GSSQ…HRDG), and 285 to 313 (RPGE…HPDP). The disordered stretch occupies residues 313–347 (PSNVASKDPQLEHENGDAPQQDVQGSSSQPNASIW). Polar residues predominate over residues 333-344 (QDVQGSSSQPNA). 2 consecutive C3H1-type zinc fingers follow at residues 433-461 (RPGQ…HPRS) and 477-505 (KPDQ…HPFN).

This chain is Zinc finger CCCH domain-containing protein 65, found in Oryza sativa subsp. japonica (Rice).